The primary structure comprises 188 residues: Putative manganese efflux pump MntP (188 aa).

The next 6 helical transmembrane spans lie at 8-28 (CLGLGLAADAFAVSLSSGFVI), 39-59 (IALFFGIFQAIMPLIGWLTGL), 68-88 (IDHWIAFILLLGIGSKMIYEA), 106-126 (LLALAIATSIDALAAGLGLSL), 131-151 (ILLPCTLIGLITFVLSFIGVF), and 164-184 (IEIIGGLTLIIIGSKILIEDL).

Belongs to the MntP (TC 9.B.29) family.

It is found in the cell inner membrane. In terms of biological role, probably functions as a manganese efflux pump. The polypeptide is Putative manganese efflux pump MntP (Crocosphaera subtropica (strain ATCC 51142 / BH68) (Cyanothece sp. (strain ATCC 51142))).